Reading from the N-terminus, the 351-residue chain is GTP 3',8-cyclase (351 aa).

The 226-residue stretch at 29-254 (RFGRVARDLR…EHGREDPSAP (226 aa)) folds into the Radical SAM core domain. Arg38 lines the GTP pocket. Positions 45 and 49 each coordinate [4Fe-4S] cluster. Tyr51 contacts S-adenosyl-L-methionine. [4Fe-4S] cluster is bound at residue Cys52. Arg89 contributes to the GTP binding site. Gly93 provides a ligand contact to S-adenosyl-L-methionine. Residue Thr120 participates in GTP binding. An S-adenosyl-L-methionine-binding site is contributed by Ser144. Lys181 is a binding site for GTP. An S-adenosyl-L-methionine-binding site is contributed by Met214. [4Fe-4S] cluster is bound by residues Cys278 and Cys281. GTP is bound at residue 283-285 (RTR). Cys295 serves as a coordination point for [4Fe-4S] cluster.

This sequence belongs to the radical SAM superfamily. MoaA family. Monomer and homodimer. It depends on [4Fe-4S] cluster as a cofactor.

The enzyme catalyses GTP + AH2 + S-adenosyl-L-methionine = (8S)-3',8-cyclo-7,8-dihydroguanosine 5'-triphosphate + 5'-deoxyadenosine + L-methionine + A + H(+). Its pathway is cofactor biosynthesis; molybdopterin biosynthesis. Functionally, catalyzes the cyclization of GTP to (8S)-3',8-cyclo-7,8-dihydroguanosine 5'-triphosphate. The polypeptide is GTP 3',8-cyclase (Rhodococcus opacus (strain B4)).